Consider the following 476-residue polypeptide: Sulfate adenylyltransferase subunit 1 (476 aa).

A tr-type G domain is found at 24 to 238 (KSLLRFLTCG…ELLEYVDIDR (215 aa)). The segment at 33-40 (GSVDDGKS) is G1. 33–40 (GSVDDGKS) is a GTP binding site. A G2 region spans residues 91-95 (GITID). The G3 stretch occupies residues 112 to 115 (DTPG). GTP-binding positions include 112 to 116 (DTPGH) and 167 to 170 (NKMD). The G4 stretch occupies residues 167 to 170 (NKMD). The G5 stretch occupies residues 205 to 207 (SAL).

The protein belongs to the TRAFAC class translation factor GTPase superfamily. Classic translation factor GTPase family. CysN/NodQ subfamily. Heterodimer composed of CysD, the smaller subunit, and CysN.

The catalysed reaction is sulfate + ATP + H(+) = adenosine 5'-phosphosulfate + diphosphate. Its pathway is sulfur metabolism; hydrogen sulfide biosynthesis; sulfite from sulfate: step 1/3. Functionally, with CysD forms the ATP sulfurylase (ATPS) that catalyzes the adenylation of sulfate producing adenosine 5'-phosphosulfate (APS) and diphosphate, the first enzymatic step in sulfur assimilation pathway. APS synthesis involves the formation of a high-energy phosphoric-sulfuric acid anhydride bond driven by GTP hydrolysis by CysN coupled to ATP hydrolysis by CysD. The polypeptide is Sulfate adenylyltransferase subunit 1 (Vibrio cholerae serotype O1 (strain M66-2)).